We begin with the raw amino-acid sequence, 582 residues long: ATP-dependent lipid A-core flippase (582 aa).

Helical transmembrane passes span 16-36 (LWPT…ALIL), 64-84 (LMWM…TSYI), 153-173 (IIGL…ILIV), 253-273 (PIIQ…ASFP), and 275-295 (VMDS…IALM). The region spanning 28-310 (IVAGVALILN…LTNVNAQFQR (283 aa)) is the ABC transmembrane type-1 domain. An ABC transporter domain is found at 342 to 578 (VEFRNVTFTY…RGVYAQLHKM (237 aa)). Position 376 to 383 (376 to 383 (GRSGSGKS)) interacts with ATP.

Belongs to the ABC transporter superfamily. Lipid exporter (TC 3.A.1.106) family. In terms of assembly, homodimer.

Its subcellular location is the cell inner membrane. The catalysed reaction is ATP + H2O + lipid A-core oligosaccharideSide 1 = ADP + phosphate + lipid A-core oligosaccharideSide 2.. In terms of biological role, involved in lipopolysaccharide (LPS) biosynthesis. Translocates lipid A-core from the inner to the outer leaflet of the inner membrane. Transmembrane domains (TMD) form a pore in the inner membrane and the ATP-binding domain (NBD) is responsible for energy generation. This is ATP-dependent lipid A-core flippase from Escherichia coli O6:K15:H31 (strain 536 / UPEC).